We begin with the raw amino-acid sequence, 159 residues long: Eukaryotic translation initiation factor 5A-2 (159 aa).

Positions 1-12 (MSDEEHQFESKA) are enriched in basic and acidic residues. A disordered region spans residues 1–23 (MSDEEHQFESKADAGASKTYPQQ). Position 52 is a hypusine (Lys52).

This sequence belongs to the eIF-5A family. In terms of processing, lys-52 undergoes hypusination, a unique post-translational modification that consists in the addition of a butylamino group from spermidine to lysine side chain, leading to the formation of the unusual amino acid hypusine. eIF-5As are the only known proteins to undergo this modification, which is essential for their function.

Functionally, translation factor that promotes translation elongation and termination, particularly upon ribosome stalling at specific amino acid sequence contexts. Binds between the exit (E) and peptidyl (P) site of the ribosome and promotes rescue of stalled ribosome: specifically required for efficient translation of polyproline-containing peptides as well as other motifs that stall the ribosome. Acts as a ribosome quality control (RQC) cofactor by joining the RQC complex to facilitate peptidyl transfer during CAT tailing step. This is Eukaryotic translation initiation factor 5A-2 (EIF-5A2) from Nicotiana plumbaginifolia (Leadwort-leaved tobacco).